The chain runs to 71 residues: Translational regulator CsrA (71 aa).

This sequence belongs to the CsrA/RsmA family. As to quaternary structure, homodimer; the beta-strands of each monomer intercalate to form a hydrophobic core, while the alpha-helices form wings that extend away from the core.

The protein resides in the cytoplasm. A translational regulator that binds mRNA to regulate translation initiation and/or mRNA stability. Usually binds in the 5'-UTR at or near the Shine-Dalgarno sequence preventing ribosome-binding, thus repressing translation. Its main target seems to be the major flagellin gene, while its function is anatagonized by FliW. The polypeptide is Translational regulator CsrA (Clostridium botulinum (strain Alaska E43 / Type E3)).